Consider the following 93-residue polypeptide: Alpha-defensin 2 (93 aa).

A signal peptide spans 1–19 (MKPLVLLSALVLLSFQVQA). A propeptide spanning residues 20–58 (DPIQNTDEETKTEEQSGEEDQAVSVSFGDREGASLQEES) is cleaved from the precursor. A disordered region spans residues 23–49 (QNTDEETKTEEQSGEEDQAVSVSFGDR). 3 disulfides stabilise this stretch: C64–C92, C66–C81, and C71–C91.

The protein belongs to the alpha-defensin family. In terms of tissue distribution, paneth cells of the small bowel.

The protein localises to the secreted. In terms of biological role, has broad-spectrum antimicrobial properties. Has antibacterial activity against the Gram-positive bacterium L.monocytogenes EGD and the Gram-negative bacteria E.coli ML-35p and avirulent S.typhimurium 7953, but not against the mouse-virulent S.typhimurium 14028S. Probably contributes to the antimicrobial barrier function of the small bowel mucosa. This chain is Alpha-defensin 2 (Defa2), found in Mus musculus (Mouse).